A 301-amino-acid chain; its full sequence is Mitochondrial thiamine pyrophosphate carrier 1 (301 aa).

Solcar repeat units lie at residues 15 to 102 (VTPT…ISKS), 115 to 200 (SSAN…AREL), and 206 to 293 (RVPF…SLSF). Transmembrane regions (helical) follow at residues 20 to 38 (ALVAGSIAGAISRAFTAPL), 79 to 99 (VPAEILYILYGGVQFGSYSII), 121 to 141 (LIVGIGSGIVSTLVTYPFDLL), 172 to 192 (IYAGIRPAMLSVSSTTGLMFW), 207 to 227 (VPFIEAICGFIAGATSKGITF), and 252 to 272 (IFVTILKNEGVFGLYKGFGIS).

Belongs to the mitochondrial carrier (TC 2.A.29) family.

The protein localises to the mitochondrion inner membrane. Functionally, mitochondrial transporter that mediates uptake of thiamine pyrophosphate (ThPP) into mitochondria. This chain is Mitochondrial thiamine pyrophosphate carrier 1 (TPC1), found in Candida albicans (strain SC5314 / ATCC MYA-2876) (Yeast).